The following is an 81-amino-acid chain: Antitoxin VapB20 (81 aa).

Functionally, antitoxin component of a type II toxin-antitoxin (TA) system. Neutralizes the toxic effect of cognate toxin VapC20. The protein is Antitoxin VapB20 (vapB20) of Mycobacterium tuberculosis (strain CDC 1551 / Oshkosh).